The primary structure comprises 489 residues: NADH-quinone oxidoreductase subunit N (489 aa).

Helical transmembrane passes span 6–26, 37–57, 66–86, 105–125, 127–147, 159–179, 204–224, 239–259, 271–291, 299–319, 329–349, 377–397, 408–430, and 452–472; these read VLFI…AVML, VFYI…PASS, LLIV…GSLA, FYLL…AHHL, AIFI…GYAF, YMVL…LIYA, ITLL…KLSL, PAPV…AVLL, FFYS…NLLA, RLLG…LIAC, VALY…VVSL, SAMT…GFIG, FHLW…YYLR, and ALTT…LLGI.

It belongs to the complex I subunit 2 family. As to quaternary structure, NDH-1 is composed of 14 different subunits. Subunits NuoA, H, J, K, L, M, N constitute the membrane sector of the complex.

It localises to the cell inner membrane. The catalysed reaction is a quinone + NADH + 5 H(+)(in) = a quinol + NAD(+) + 4 H(+)(out). Functionally, NDH-1 shuttles electrons from NADH, via FMN and iron-sulfur (Fe-S) centers, to quinones in the respiratory chain. The immediate electron acceptor for the enzyme in this species is believed to be ubiquinone. Couples the redox reaction to proton translocation (for every two electrons transferred, four hydrogen ions are translocated across the cytoplasmic membrane), and thus conserves the redox energy in a proton gradient. This Tolumonas auensis (strain DSM 9187 / NBRC 110442 / TA 4) protein is NADH-quinone oxidoreductase subunit N.